A 415-amino-acid polypeptide reads, in one-letter code: SVF1-like protein YDR222W (415 aa).

Belongs to the SVF1 family.

The protein resides in the cytoplasm. This chain is SVF1-like protein YDR222W, found in Saccharomyces cerevisiae (strain ATCC 204508 / S288c) (Baker's yeast).